The chain runs to 484 residues: Proline--tRNA ligase (484 aa).

Belongs to the class-II aminoacyl-tRNA synthetase family. ProS type 3 subfamily. Homodimer.

The protein localises to the cytoplasm. The enzyme catalyses tRNA(Pro) + L-proline + ATP = L-prolyl-tRNA(Pro) + AMP + diphosphate. Its function is as follows. Catalyzes the attachment of proline to tRNA(Pro) in a two-step reaction: proline is first activated by ATP to form Pro-AMP and then transferred to the acceptor end of tRNA(Pro). This is Proline--tRNA ligase from Haloarcula marismortui (strain ATCC 43049 / DSM 3752 / JCM 8966 / VKM B-1809) (Halobacterium marismortui).